The chain runs to 442 residues: 26S proteasome non-ATPase regulatory subunit 12 homolog B (442 aa).

Positions 1–129 form a coiled coil; that stretch reads MEESRQLESS…KEEQGLIAEA (129 aa). In terms of domain architecture, PCI spans 232–403; sequence EICRSYKAIY…GIICFQIVKD (172 aa).

It belongs to the proteasome subunit p55 family. In terms of assembly, component of the 19S regulatory particle (RP/PA700) lid subcomplex of the 26S proteasome. The 26S proteasome is composed of a core protease (CP), known as the 20S proteasome, capped at one or both ends by the 19S regulatory particle (RP/PA700). The RP/PA700 complex is composed of at least 17 different subunits in two subcomplexes, the base and the lid, which form the portions proximal and distal to the 20S proteolytic core, respectively. In terms of tissue distribution, ubiquitous with highest expression in flowers.

It localises to the cytoplasm. It is found in the nucleus. Functionally, acts as a regulatory subunit of the 26 proteasome which is involved in the ATP-dependent degradation of ubiquitinated proteins. Acts redundantly with RPN5A. This Arabidopsis thaliana (Mouse-ear cress) protein is 26S proteasome non-ATPase regulatory subunit 12 homolog B (RPN5B).